The chain runs to 305 residues: Tyrosine recombinase XerD (305 aa).

In terms of domain architecture, Core-binding (CB) spans 1–83 (MEFISQFLEM…TIKSYYEFLI (83 aa)). Residues 104 to 298 (KLPEILSIDD…QTNHLKKALL (195 aa)) form the Tyr recombinase domain. Catalysis depends on residues arginine 145, lysine 175, histidine 250, arginine 253, and histidine 276. Tyrosine 285 functions as the O-(3'-phospho-DNA)-tyrosine intermediate in the catalytic mechanism.

Belongs to the 'phage' integrase family. XerD subfamily. As to quaternary structure, forms a cyclic heterotetrameric complex composed of two molecules of XerC and two molecules of XerD.

It localises to the cytoplasm. Site-specific tyrosine recombinase, which acts by catalyzing the cutting and rejoining of the recombining DNA molecules. The XerC-XerD complex is essential to convert dimers of the bacterial chromosome into monomers to permit their segregation at cell division. It also contributes to the segregational stability of plasmids. The chain is Tyrosine recombinase XerD from Rickettsia bellii (strain RML369-C).